We begin with the raw amino-acid sequence, 124 residues long: Fluoride-specific ion channel FluC (124 aa).

Helical transmembrane passes span 4–24, 36–56, 63–83, and 100–120; these read YLVI…TGVY, GTLI…ILFL, PLWR…LSSI, and LLNI…GIVL. Residues glycine 75 and threonine 78 each coordinate Na(+).

It belongs to the fluoride channel Fluc/FEX (TC 1.A.43) family.

The protein localises to the cell inner membrane. The catalysed reaction is fluoride(in) = fluoride(out). Its activity is regulated as follows. Na(+) is not transported, but it plays an essential structural role and its presence is essential for fluoride channel function. In terms of biological role, fluoride-specific ion channel. Important for reducing fluoride concentration in the cell, thus reducing its toxicity. The sequence is that of Fluoride-specific ion channel FluC from Sulfurihydrogenibium sp. (strain YO3AOP1).